A 276-amino-acid chain; its full sequence is Undecaprenyl-diphosphatase (276 aa).

The next 7 helical transmembrane spans lie at 12-34 (LGIV…IVVG), 43-63 (TATA…MWEF), 85-105 (FNLL…ADLI), 108-128 (WLFN…IMLW), 185-205 (TEFS…YSLF), 218-238 (IFAI…RALL), and 249-269 (FAWY…LHLI).

This sequence belongs to the UppP family.

Its subcellular location is the cell inner membrane. The catalysed reaction is di-trans,octa-cis-undecaprenyl diphosphate + H2O = di-trans,octa-cis-undecaprenyl phosphate + phosphate + H(+). Functionally, catalyzes the dephosphorylation of undecaprenyl diphosphate (UPP). Confers resistance to bacitracin. This chain is Undecaprenyl-diphosphatase, found in Ectopseudomonas mendocina (strain ymp) (Pseudomonas mendocina).